The following is a 603-amino-acid chain: Beta-hexosaminidase (603 aa).

An N-terminal signal peptide occupies residues 1–19; the sequence is MAYFRLYAVLLAVASSVAA. Active-site charge relay system residues include D225, H278, and E349. C293 and C354 are oxidised to a cystine. N-linked (GlcNAc...) asparagine glycosylation occurs at N356. C451 and C486 are oxidised to a cystine. N-linked (GlcNAc...) asparagine glycosylation is found at N503 and N528. An intrachain disulfide couples C586 to C593.

Belongs to the glycosyl hydrolase 20 family. In terms of assembly, homodimer.

The protein resides in the secreted. It carries out the reaction Hydrolysis of terminal non-reducing N-acetyl-D-hexosamine residues in N-acetyl-beta-D-hexosaminides.. Its function is as follows. Part of the binary chitinolytic system. Involved in hydrolysis of chitobiose and higher chito-oligomers (produced from cell wall chitin by endochitinases), thus contributing to the formation of germ tubes, fruit-bodies and septa during hyphenation. Hydrolyzes synthetic substrates p-nitrophenyl-beta-N-acetyl-glucosamine (pNP-beta-GlcNAc), p-nitrophenyl-beta-N-acetyl-galactosamine (pNP-beta-GalNAc) and 5-bromo-4-chloro-3-indoyl-beta-D-N-glucosaminide (X-GlcNAc). The protein is Beta-hexosaminidase of Emericella nidulans (Aspergillus nidulans).